A 734-amino-acid polypeptide reads, in one-letter code: DNA replication licensing factor MCM5 (734 aa).

Position 2 is an N-acetylserine (Ser-2). In terms of domain architecture, MCM spans 331–537 (IYELISKSIA…RDVMLAKHVI (207 aa)). Residue Arg-371 coordinates ADP. N6-acetyllysine occurs at positions 392 and 396. An Arginine finger motif is present at residues 512–515 (SRFD). A Phosphoserine modification is found at Ser-605.

This sequence belongs to the MCM family. Component of the MCM2-7 complex. The complex forms a toroidal hexameric ring with the proposed subunit order MCM2-MCM6-MCM4-MCM7-MCM3-MCM5. Component of the CMG helicase complex, a hexameric ring of related MCM2-7 subunits stabilized by CDC45 and the tetrameric GINS complex. Interacts with ANKRD17. Interacts with MCMBP. Interacts with TONSL; the interaction is direct.

The protein localises to the nucleus. The protein resides in the chromosome. It is found in the cytoplasm. Its subcellular location is the cytosol. It carries out the reaction ATP + H2O = ADP + phosphate + H(+). Functionally, acts as a component of the MCM2-7 complex (MCM complex) which is the replicative helicase essential for 'once per cell cycle' DNA replication initiation and elongation in eukaryotic cells. Core component of CDC45-MCM-GINS (CMG) helicase, the molecular machine that unwinds template DNA during replication, and around which the replisome is built. The active ATPase sites in the MCM2-7 ring are formed through the interaction surfaces of two neighboring subunits such that a critical structure of a conserved arginine finger motif is provided in trans relative to the ATP-binding site of the Walker A box of the adjacent subunit. The six ATPase active sites, however, are likely to contribute differentially to the complex helicase activity. The polypeptide is DNA replication licensing factor MCM5 (Bos taurus (Bovine)).